The following is a 326-amino-acid chain: GTP 3',8-cyclase (326 aa).

Residues 7–232 (GFGRSFPYLR…PRAADAGPAR (226 aa)) enclose the Radical SAM core domain. Arg-16 is a GTP binding site. Positions 23 and 27 each coordinate [4Fe-4S] cluster. Tyr-29 lines the S-adenosyl-L-methionine pocket. Cys-30 serves as a coordination point for [4Fe-4S] cluster. Arg-65 serves as a coordination point for GTP. Gly-69 contacts S-adenosyl-L-methionine. GTP is bound at residue Thr-96. Position 120 (Ser-120) interacts with S-adenosyl-L-methionine. A GTP-binding site is contributed by Lys-157. Met-191 contributes to the S-adenosyl-L-methionine binding site. [4Fe-4S] cluster-binding residues include Cys-254 and Cys-257. 259–261 (RLR) provides a ligand contact to GTP. Cys-271 lines the [4Fe-4S] cluster pocket.

It belongs to the radical SAM superfamily. MoaA family. In terms of assembly, monomer and homodimer. [4Fe-4S] cluster serves as cofactor.

It catalyses the reaction GTP + AH2 + S-adenosyl-L-methionine = (8S)-3',8-cyclo-7,8-dihydroguanosine 5'-triphosphate + 5'-deoxyadenosine + L-methionine + A + H(+). Its pathway is cofactor biosynthesis; molybdopterin biosynthesis. In terms of biological role, catalyzes the cyclization of GTP to (8S)-3',8-cyclo-7,8-dihydroguanosine 5'-triphosphate. The sequence is that of GTP 3',8-cyclase from Stenotrophomonas maltophilia (strain R551-3).